The chain runs to 75 residues: Small ribosomal subunit protein bS18 (75 aa).

This sequence belongs to the bacterial ribosomal protein bS18 family. As to quaternary structure, part of the 30S ribosomal subunit. Forms a tight heterodimer with protein bS6.

In terms of biological role, binds as a heterodimer with protein bS6 to the central domain of the 16S rRNA, where it helps stabilize the platform of the 30S subunit. The protein is Small ribosomal subunit protein bS18 of Glaesserella parasuis serovar 5 (strain SH0165) (Haemophilus parasuis).